A 780-amino-acid polypeptide reads, in one-letter code: Chloride channel protein CLC-b (780 aa).

Positions 1–28 (MVEEDLNQIGGNSNYNGEGGDPESNTLN) are disordered. The next 12 helical transmembrane spans lie at 87–107 (TLAC…NLAV), 130–150 (GLMV…VLCV), 177–197 (FGAT…AAGL), 205–225 (LVHI…DNHR), 247–267 (GSAA…LFAL), 277–297 (ALLW…REFI), 327–347 (VTDI…GSLY), 370–390 (VLLS…LPFL), 452–472 (MGSL…TFGI), 477–497 (GLFL…GAAM), 509–529 (AVLG…SLCV), and 530–550 (IFLE…VLLI). 2 CBS domains span residues 594–663 (AKPP…FLTE) and 708–770 (TNTT…AFPL). Residues 735-755 (HLLIVPKIQASGMCPVVGILT) traverse the membrane as a helical segment.

Belongs to the chloride channel (TC 2.A.49) family. In terms of assembly, homodimer. Interacts with PP2A5. Broadly expressed in the plant.

It is found in the membrane. Voltage-gated chloride channel. This chain is Chloride channel protein CLC-b (CLC-B), found in Arabidopsis thaliana (Mouse-ear cress).